The sequence spans 275 residues: N-(5'-phosphoribosyl)anthranilate isomerase 1, chloroplastic (275 aa).

The transit peptide at 1–32 (MSTGISTDLHVHFGALNFSKTYKSGLSNRTVS) directs the protein to the chloroplast.

Belongs to the TrpF family. In terms of tissue distribution, expressed in roots and shoots.

The protein resides in the plastid. It localises to the chloroplast. It carries out the reaction N-(5-phospho-beta-D-ribosyl)anthranilate = 1-(2-carboxyphenylamino)-1-deoxy-D-ribulose 5-phosphate. It functions in the pathway amino-acid biosynthesis; L-tryptophan biosynthesis; L-tryptophan from chorismate: step 3/5. Functionally, catalyzes the conversion of 5-phosphoribosylanthranilate to l-(O-carboxyphenylamino)-l-deoxyribulose-5-phosphate, which is the third step of the tryptophan biosynthetic pathway. The chain is N-(5'-phosphoribosyl)anthranilate isomerase 1, chloroplastic (PAI1) from Arabidopsis thaliana (Mouse-ear cress).